Reading from the N-terminus, the 239-residue chain is Uridylate kinase (239 aa).

10 to 13 (KFSG) lines the ATP pocket. The involved in allosteric activation by GTP stretch occupies residues 18 to 23 (GENGFG). Glycine 52 is a UMP binding site. ATP contacts are provided by glycine 53 and arginine 57. UMP-binding positions include aspartate 73 and 134–141 (TGNPYFTT). Residues threonine 161, tyrosine 167, and aspartate 170 each contribute to the ATP site.

It belongs to the UMP kinase family. In terms of assembly, homohexamer.

Its subcellular location is the cytoplasm. The enzyme catalyses UMP + ATP = UDP + ADP. Its pathway is pyrimidine metabolism; CTP biosynthesis via de novo pathway; UDP from UMP (UMPK route): step 1/1. With respect to regulation, allosterically activated by GTP. Inhibited by UTP. Functionally, catalyzes the reversible phosphorylation of UMP to UDP. This chain is Uridylate kinase, found in Campylobacter jejuni subsp. jejuni serotype O:6 (strain 81116 / NCTC 11828).